We begin with the raw amino-acid sequence, 196 residues long: Peptidyl-tRNA hydrolase (196 aa).

Tyr18 contributes to the tRNA binding site. His23 acts as the Proton acceptor in catalysis. The tRNA site is built by Phe69, Asn71, and Asn117.

Belongs to the PTH family. In terms of assembly, monomer.

Its subcellular location is the cytoplasm. It catalyses the reaction an N-acyl-L-alpha-aminoacyl-tRNA + H2O = an N-acyl-L-amino acid + a tRNA + H(+). Its function is as follows. Hydrolyzes ribosome-free peptidyl-tRNAs (with 1 or more amino acids incorporated), which drop off the ribosome during protein synthesis, or as a result of ribosome stalling. Catalyzes the release of premature peptidyl moieties from peptidyl-tRNA molecules trapped in stalled 50S ribosomal subunits, and thus maintains levels of free tRNAs and 50S ribosomes. The polypeptide is Peptidyl-tRNA hydrolase (Vibrio vulnificus (strain CMCP6)).